The following is a 305-amino-acid chain: Tyrosine recombinase XerC (305 aa).

The Core-binding (CB) domain maps to 4 to 95 (TQIQELIIKW…AIKNFYKFLE (92 aa)). In terms of domain architecture, Tyr recombinase spans 116-298 (LLPKALSEEE…SIKHLETAYV (183 aa)). Residues Arg159, Lys182, His250, Arg253, and His276 contribute to the active site. Tyr285 (O-(3'-phospho-DNA)-tyrosine intermediate) is an active-site residue.

This sequence belongs to the 'phage' integrase family. XerC subfamily. Forms a cyclic heterotetrameric complex composed of two molecules of XerC and two molecules of XerD.

The protein resides in the cytoplasm. Its function is as follows. Site-specific tyrosine recombinase, which acts by catalyzing the cutting and rejoining of the recombining DNA molecules. The XerC-XerD complex is essential to convert dimers of the bacterial chromosome into monomers to permit their segregation at cell division. It also contributes to the segregational stability of plasmids. This chain is Tyrosine recombinase XerC, found in Rickettsia bellii (strain RML369-C).